A 258-amino-acid polypeptide reads, in one-letter code: MSLIDPRAIIDPAARLADDVQVGPWSIIGPDVEIGEGTVIASHVVIKGPTRIGRHNRIYQFSSVGEDTPDLKYKGEPTRLVIGDHNVIREGVTIHRGTVQDRSETTIGDHNLIMAYAHIGHDSVIANHCILVNNTALAGHVHVGDWAILSGYTLVHQFCHIGAHSFSGMGTAIGKDVPAFVTVFGNPAEARSMNFEGMRRRGFSAEAVHALRNAYKIVYRKGLTVEAALSELAESAAAFPEVAIFRDSIQASTRGITR.

Belongs to the transferase hexapeptide repeat family. LpxA subfamily. In terms of assembly, homotrimer.

The protein localises to the cytoplasm. The enzyme catalyses a (3R)-hydroxyacyl-[ACP] + UDP-N-acetyl-alpha-D-glucosamine = a UDP-3-O-[(3R)-3-hydroxyacyl]-N-acetyl-alpha-D-glucosamine + holo-[ACP]. The protein operates within glycolipid biosynthesis; lipid IV(A) biosynthesis; lipid IV(A) from (3R)-3-hydroxytetradecanoyl-[acyl-carrier-protein] and UDP-N-acetyl-alpha-D-glucosamine: step 1/6. In terms of biological role, involved in the biosynthesis of lipid A, a phosphorylated glycolipid that anchors the lipopolysaccharide to the outer membrane of the cell. In Stutzerimonas stutzeri (strain A1501) (Pseudomonas stutzeri), this protein is Acyl-[acyl-carrier-protein]--UDP-N-acetylglucosamine O-acyltransferase.